The sequence spans 55 residues: Large ribosomal subunit protein bL33B (55 aa).

It belongs to the bacterial ribosomal protein bL33 family.

The chain is Large ribosomal subunit protein bL33B from Kineococcus radiotolerans (strain ATCC BAA-149 / DSM 14245 / SRS30216).